A 111-amino-acid chain; its full sequence is Ferredoxin, 2Fe-2S (111 aa).

[2Fe-2S] cluster-binding residues include Cys10, Cys23, Cys56, and Cys60.

Homodimer in solution. [2Fe-2S] cluster is required as a cofactor.

Functionally, ferredoxins are iron-sulfur proteins that transfer electrons in a wide variety of metabolic reactions. The protein is Ferredoxin, 2Fe-2S (fdx4) of Aquifex aeolicus (strain VF5).